Here is a 207-residue protein sequence, read N- to C-terminus: Interleukin-6 (207 aa).

The first 20 residues, 1 to 20 (MNSLSTSAFSLGLLLVMATA), serve as a signal peptide directing secretion. The cysteines at positions 67 and 73 are disulfide-linked. Serine 76 carries the phosphoserine modification. Cysteine 96 and cysteine 106 are joined by a disulfide.

This sequence belongs to the IL-6 superfamily. In terms of assembly, component of a hexamer of two molecules each of IL6, IL6R and IL6ST; first binds to IL6R to associate with the signaling subunit IL6ST. Interacts with IL6R (via the N-terminal ectodomain); this interaction may be affected by IL6R-binding with SORL1, hence decreasing IL6 cis signaling. Interacts with SORL1 (via the N-terminal ectodomain); this interaction leads to IL6 internalization and lysosomal degradation. May form a trimeric complex with the soluble SORL1 ectodomain and soluble IL6R receptor; this interaction might stabilize circulating IL6, hence promoting IL6 trans signaling.

Its subcellular location is the secreted. Functionally, cytokine with a wide variety of biological functions in immunity, tissue regeneration, and metabolism. Binds to IL6R, then the complex associates to the signaling subunit IL6ST/gp130 to trigger the intracellular IL6-signaling pathway. The interaction with the membrane-bound IL6R and IL6ST stimulates 'classic signaling', whereas the binding of IL6 and soluble IL6R to IL6ST stimulates 'trans-signaling'. Alternatively, 'cluster signaling' occurs when membrane-bound IL6:IL6R complexes on transmitter cells activate IL6ST receptors on neighboring receiver cells. In terms of biological role, IL6 is a potent inducer of the acute phase response. Rapid production of IL6 contributes to host defense during infection and tissue injury, but excessive IL6 synthesis is involved in disease pathology. In the innate immune response, is synthesized by myeloid cells, such as macrophages and dendritic cells, upon recognition of pathogens through toll-like receptors (TLRs) at the site of infection or tissue injury. In the adaptive immune response, is required for the differentiation of B cells into immunoglobulin-secreting cells. Plays a major role in the differentiation of CD4(+) T cell subsets. Essential factor for the development of T follicular helper (Tfh) cells that are required for the induction of germinal-center formation. Required to drive naive CD4(+) T cells to the Th17 lineage. Also required for proliferation of myeloma cells and the survival of plasmablast cells. Its function is as follows. Acts as an essential factor in bone homeostasis and on vessels directly or indirectly by induction of VEGF, resulting in increased angiogenesis activity and vascular permeability. Induces, through 'trans-signaling' and synergistically with IL1B and TNF, the production of VEGF. Involved in metabolic controls, is discharged into the bloodstream after muscle contraction increasing lipolysis and improving insulin resistance. 'Trans-signaling' in central nervous system also regulates energy and glucose homeostasis. Mediates, through GLP-1, crosstalk between insulin-sensitive tissues, intestinal L cells and pancreatic islets to adapt to changes in insulin demand. Also acts as a myokine. Plays a protective role during liver injury, being required for maintenance of tissue regeneration. Also has a pivotal role in iron metabolism by regulating HAMP/hepcidin expression upon inflammation or bacterial infection. Through activation of IL6ST-YAP-NOTCH pathway, induces inflammation-induced epithelial regeneration. This chain is Interleukin-6 (IL6), found in Vulpes vulpes (Red fox).